The sequence spans 210 residues: Ribosomal RNA large subunit methyltransferase E (210 aa).

S-adenosyl-L-methionine contacts are provided by glycine 67, tryptophan 69, aspartate 87, aspartate 103, and aspartate 128. Residue lysine 168 is the Proton acceptor of the active site.

This sequence belongs to the class I-like SAM-binding methyltransferase superfamily. RNA methyltransferase RlmE family.

It is found in the cytoplasm. It carries out the reaction uridine(2552) in 23S rRNA + S-adenosyl-L-methionine = 2'-O-methyluridine(2552) in 23S rRNA + S-adenosyl-L-homocysteine + H(+). Its function is as follows. Specifically methylates the uridine in position 2552 of 23S rRNA at the 2'-O position of the ribose in the fully assembled 50S ribosomal subunit. This chain is Ribosomal RNA large subunit methyltransferase E, found in Psychrobacter arcticus (strain DSM 17307 / VKM B-2377 / 273-4).